The primary structure comprises 384 residues: N-acetyldiaminopimelate deacetylase (384 aa).

D74 is an active-site residue. Catalysis depends on E133, which acts as the Proton acceptor.

The protein belongs to the peptidase M20A family. N-acetyldiaminopimelate deacetylase subfamily.

It carries out the reaction N-acetyl-(2S,6S)-2,6-diaminopimelate + H2O = (2S,6S)-2,6-diaminopimelate + acetate. It participates in amino-acid biosynthesis; L-lysine biosynthesis via DAP pathway; LL-2,6-diaminopimelate from (S)-tetrahydrodipicolinate (acetylase route): step 3/3. Catalyzes the conversion of N-acetyl-diaminopimelate to diaminopimelate and acetate. The protein is N-acetyldiaminopimelate deacetylase of Leuconostoc mesenteroides subsp. mesenteroides (strain ATCC 8293 / DSM 20343 / BCRC 11652 / CCM 1803 / JCM 6124 / NCDO 523 / NBRC 100496 / NCIMB 8023 / NCTC 12954 / NRRL B-1118 / 37Y).